The chain runs to 190 residues: MPKASEVKKGTAIDFNGRVLVVKDIVRSVPQGRAGGSLYRMRLYDVVTGSKVDETFKDSDMLTLADLTRREAMLSYIDGDEYVFMDNEDYTPYNLSKDAISEEILFVNEETQGVHVIVIDGAPVGLDLPSSVELVVEETDPSIKGASASARSKPARMSTGLNISVPEHISTGDRIRINTAEHKFMGRAEK.

This sequence belongs to the elongation factor P family.

The protein is Elongation factor P-like protein of Pseudoalteromonas translucida (strain TAC 125).